The chain runs to 400 residues: Aspartate/prephenate aminotransferase (400 aa).

L-aspartate contacts are provided by Gly39, Trp125, and Asn175. Lys239 is modified (N6-(pyridoxal phosphate)lysine). Arg375 provides a ligand contact to L-aspartate.

It belongs to the class-I pyridoxal-phosphate-dependent aminotransferase family. As to quaternary structure, homodimer. Requires pyridoxal 5'-phosphate as cofactor.

It is found in the cytoplasm. The catalysed reaction is L-aspartate + 2-oxoglutarate = oxaloacetate + L-glutamate. It carries out the reaction L-arogenate + 2-oxoglutarate = prephenate + L-glutamate. Functionally, catalyzes the reversible conversion of aspartate and 2-oxoglutarate to glutamate and oxaloacetate. Can also transaminate prephenate in the presence of glutamate. This Cereibacter sphaeroides (strain ATCC 17029 / ATH 2.4.9) (Rhodobacter sphaeroides) protein is Aspartate/prephenate aminotransferase.